We begin with the raw amino-acid sequence, 207 residues long: Guanylate kinase (207 aa).

The Guanylate kinase-like domain occupies 4–184 (GTLYIVSAPS…ALSDLKTIIR (181 aa)). Residue 11 to 18 (APSGAGKS) participates in ATP binding.

The protein belongs to the guanylate kinase family.

It is found in the cytoplasm. The enzyme catalyses GMP + ATP = GDP + ADP. Essential for recycling GMP and indirectly, cGMP. This chain is Guanylate kinase, found in Salmonella paratyphi A (strain ATCC 9150 / SARB42).